The chain runs to 852 residues: MLITERKHFRSGRIAQSMSEANLIDMEAGKLSKSCNITECQDPDLLHNWPDAFTLRGNNASKVANPFWNQLSASNPFLDDITQLRNNRKRNNISILKEDPFLFCREIENGNSFDSSGDELDVHQLLRQTSSRNSGRSKSVSELLDILDDTAHAHQSIHNSDQILLHDLEWLKNDREAYKMAWLSQRQLARSCLDLNTISQSPGWAQTQLAEVTIACKVNHQGGSVQLPESDITVHVPQGHVAVGEFQEVSLRAFLDPPHMLNHDLSCTVSPLLEIMLGNLNTMEALLLEMKIGAEVRKDPFSQVMTEMVCLHSLGKEGPFKVLSNCYIYKDTIQVKLIDLSQVMYLVVAAQAKALPSPAATIWDYIHKTTSIGIYGPKYIHPSFTVVLTVCGHNYMPGQLTISDIKKGGKNISPVVFQLWGKQSFLLDKPQDLSISIFSCDPDFEVKTEGERKEIKQKQLEAGEVVHQQFLFSLVEHREMHLFDFCVQVEPPNGEPVAQFSITTPDPTPNLKRLSNLPGYLQKKEEIKSAPLSPKILVKYPTFQDKTLNFSNYGVTLKAVLRQSKIDYFLEYFKGDTIALLGEGKVKAIGQSKVKEWYVGVLRGKIGLVHCKNVKVISKEQVMFMSDSVFTTRNLLEQIVLPLKKLTYIYSVVLTLVSEKVYDWKVLADVLGYSHLSLEDFDQIQADKESEKVSYVIKKLKEDCHTERNTRKFLYELIVALLKMDCQELVARLIQEAAVLTSAVKLGKGWRELAEKLVRLTKQQMEAYEIPHRGNTGDVAVEMMWKPAYDFLYTWSAHYGNNYRDVLQDLQSALDRMKNPVTKHWRELTGVLILVNSLEVLRVTAFSTSEEV.

At Ser-19 the chain carries Phosphoserine. Residues 212–349 form the ZU5 domain; that stretch reads VTIACKVNHQ…LSQVMYLVVA (138 aa). Residues 549–619 enclose the SH3 domain; that stretch reads NFSNYGVTLK…HCKNVKVISK (71 aa).

As to quaternary structure, interacts with FASLG. As to expression, preferentially expressed in metastasizing tumors.

The protein localises to the cytoplasm. It is found in the nucleus. Functionally, acts as a transcription activator for MET and as a key regulator of HGF-MET signaling. Promotes cell motility, proliferation and hepatocyte growth factor (HGF)-dependent scattering in vitro and tumor growth and metastasis in vivo. The chain is Metastasis-associated in colon cancer protein 1 (MACC1) from Homo sapiens (Human).